A 581-amino-acid chain; its full sequence is Arginine--tRNA ligase (581 aa).

The short motif at 126 to 136 is the 'HIGH' region element; the sequence is PNLAKEMHVGH.

Belongs to the class-I aminoacyl-tRNA synthetase family. As to quaternary structure, monomer.

The protein localises to the cytoplasm. It catalyses the reaction tRNA(Arg) + L-arginine + ATP = L-arginyl-tRNA(Arg) + AMP + diphosphate. This is Arginine--tRNA ligase from Shewanella frigidimarina (strain NCIMB 400).